Here is a 923-residue protein sequence, read N- to C-terminus: MRFSHFLKYNAVPEWQNHYLDYNELKNLIYTLQTDELKQETPTGDLNDDADSQTPGPIADIESNIAAGEPSSSKRRFTHKLKRKLFGSKTPSGSKRGDSDEKAIDGNNINEETIELDELSPQGKTTSFNKNFIRKKFFESRSSSVSSEGKTLFSSYDTFVTNLSDEKLKVDDFYKRMEAKFYERFDHLINDLEKEGIVTRLNETFNPEIQALPPLREIISGTSETHSSNNPFEIHSSNIDSELRNRFDYSEEEMDEDDDVDVFADTTDNTALLNYSQFNIKSQKKSLLKQTIINLYIDLCQLKSFIELNRMGFSKITKKSDKVLHMNTRQELIESEEFFKDTYIFQHETLSSLNSKIAQLIEFYAVLMGQPGNVDSCKQELKSYLHDHIVWERSNTWKDMLGLSSQNNDIITIEDEAEKLMQEKLQIEYFKYPLPKPINLKFTKIENLAVPKLFFGKRAMKIGFIIIVTGVLLGVKTFNDPVEHRCMALVECCAFLWASEAIPLHITGLLVPLLTVLFRVLKDDDGKVMGAAAASTEILGTMWSSTIMILLAGFTLGEALSQYNVAKVLASWLLALAGTKPRNVLLMAMSVVFFLSMWISNVASPVLTYSLLTPLLDPLDYTSPFAKALVMGVALSADIGGMASPISSPQNIISMQYLKPYGIGWGQFFAVALPTGILSMLCSWALMILTFKIGKTKLEKFKPIRTRFTIKQYFIIIVTIATILLWCVESQIESAFGSSGEIAVIPIVLFFGTGLLSTKDFNTFPWSIVVLAMGGIALGKAVSSSGLLVTIARALQKKIQNDGVFAILCIFGILMLVVGTFVSHTVSAIIIIPLVQEVGDKLSDPKAAPILVFGCALLASCGMGLASSGFPNVTAISMTDKKGNRWLTVGAFISRGVPASLLAFVCVITLGYGISSSVLKGST.

One can recognise an SPX domain in the interval 1 to 334 (MRFSHFLKYN…HMNTRQELIE (334 aa)). The Extracellular segment spans residues 1–461 (MRFSHFLKYN…KLFFGKRAMK (461 aa)). Disordered regions lie at residues 40–74 (ETPT…SSSK) and 86–107 (FGSK…IDGN). Positions 95–104 (KRGDSDEKAI) are enriched in basic and acidic residues. Residue Lys102 forms a Glycyl lysine isopeptide (Lys-Gly) (interchain with G-Cter in ubiquitin) linkage. N-linked (GlcNAc...) asparagine glycosylation is found at Asn162, Asn202, and Asn274. A helical transmembrane segment spans residues 462–482 (IGFIIIVTGVLLGVKTFNDPV). Over 483 to 493 (EHRCMALVECC) the chain is Cytoplasmic. Residues 494-514 (AFLWASEAIPLHITGLLVPLL) traverse the membrane as a helical segment. The Extracellular segment spans residues 515–537 (TVLFRVLKDDDGKVMGAAAASTE). The chain crosses the membrane as a helical span at residues 538 to 558 (ILGTMWSSTIMILLAGFTLGE). Over 559–583 (ALSQYNVAKVLASWLLALAGTKPRN) the chain is Cytoplasmic. Residues 584–604 (VLLMAMSVVFFLSMWISNVAS) form a helical membrane-spanning segment. Topologically, residues 605–627 (PVLTYSLLTPLLDPLDYTSPFAK) are extracellular. Residues 628 to 648 (ALVMGVALSADIGGMASPISS) traverse the membrane as a helical segment. Residues 649–667 (PQNIISMQYLKPYGIGWGQ) are Cytoplasmic-facing. Residues 668–688 (FFAVALPTGILSMLCSWALMI) form a helical membrane-spanning segment. Residues 689-707 (LTFKIGKTKLEKFKPIRTR) lie on the Extracellular side of the membrane. A helical membrane pass occupies residues 708-728 (FTIKQYFIIIVTIATILLWCV). At 729–735 (ESQIESA) the chain is on the cytoplasmic side. Residues 736 to 756 (FGSSGEIAVIPIVLFFGTGLL) form a helical membrane-spanning segment. Residues 757-767 (STKDFNTFPWS) lie on the Extracellular side of the membrane. A helical transmembrane segment spans residues 768–788 (IVVLAMGGIALGKAVSSSGLL). Over 789 to 802 (VTIARALQKKIQND) the chain is Cytoplasmic. A helical transmembrane segment spans residues 803–823 (GVFAILCIFGILMLVVGTFVS). Residues 824 to 849 (HTVSAIIIIPLVQEVGDKLSDPKAAP) are Extracellular-facing. A helical transmembrane segment spans residues 850-870 (ILVFGCALLASCGMGLASSGF). Topologically, residues 871-898 (PNVTAISMTDKKGNRWLTVGAFISRGVP) are cytoplasmic. Residues 899–919 (ASLLAFVCVITLGYGISSSVL) traverse the membrane as a helical segment. The Extracellular segment spans residues 920 to 923 (KGST).

This sequence belongs to the CitM (TC 2.A.11) transporter family.

Its subcellular location is the membrane. Functionally, involved in the uptake of inorganic phosphate. This Saccharomyces cerevisiae (strain ATCC 204508 / S288c) (Baker's yeast) protein is Inorganic phosphate transporter PHO87 (PHO87).